The primary structure comprises 38 residues: Large ribosomal subunit protein bL36 (38 aa).

This sequence belongs to the bacterial ribosomal protein bL36 family.

The chain is Large ribosomal subunit protein bL36 from Roseiflexus sp. (strain RS-1).